The primary structure comprises 960 residues: FYVE, RhoGEF and PH domain-containing protein 1 (960 aa).

Disordered regions lie at residues Met1–Ala210 and Ala226–Pro355. The residue at position 48 (Ser48) is a Phosphoserine. Positions Pro125 to Ser135 are enriched in basic and acidic residues. Composition is skewed to pro residues over residues Pro137 to Ser149, Gly156 to Pro165, and Val173 to Ala190. An SH3-binding motif is present at residues Pro171–Pro187. Ser205 is subject to Phosphoserine. The segment covering Ala231 to Pro251 has biased composition (pro residues). The span at Arg273–Gly284 shows a compositional bias: basic and acidic residues. Residues Ile285–Ser294 are compositionally biased toward low complexity. Residues Val335–Lys350 are compositionally biased toward acidic residues. One can recognise a DH domain in the interval Lys372–Ala560. In terms of domain architecture, PH 1 spans Glu589–Leu688. A disordered region spans residues Asn701–Thr725. Residue Thr710 is modified to Phosphothreonine. Position 714 is a phosphoserine (Ser714). An FYVE-type zinc finger spans residues Glu729 to His789. Residues Cys735, Cys738, Cys752, Cys755, Cys760, Cys763, Cys781, and Cys784 each contribute to the Zn(2+) site. The PH 2 domain occupies Asn820–Arg920. The tract at residues Asp922 to Thr960 is disordered.

As to quaternary structure, interacts with DBNL/ABP1 and CTTN. Binds CDC42. May interact with CCPG1.

It localises to the cytoplasm. The protein resides in the cell projection. Its subcellular location is the lamellipodium. It is found in the ruffle. The protein localises to the cytoskeleton. In terms of biological role, activates CDC42, a member of the Ras-like family of Rho- and Rac proteins, by exchanging bound GDP for free GTP. Plays a role in regulating the actin cytoskeleton and cell shape. The chain is FYVE, RhoGEF and PH domain-containing protein 1 (Fgd1) from Mus musculus (Mouse).